Here is a 441-residue protein sequence, read N- to C-terminus: Deoxyguanosinetriphosphate triphosphohydrolase-like protein (441 aa).

The region spanning 62-255 (RLTHSLEAAQ…MELADDIAYG (194 aa)) is the HD domain.

This sequence belongs to the dGTPase family. Type 2 subfamily.

The protein is Deoxyguanosinetriphosphate triphosphohydrolase-like protein (dgt) of Vibrio cholerae serotype O1 (strain ATCC 39541 / Classical Ogawa 395 / O395).